The following is a 121-amino-acid chain: Fluoride-specific ion channel FluC 3 (121 aa).

Transmembrane regions (helical) follow at residues 3-23, 40-60, 69-89, and 101-121; these read VFLPILVCLCGGVGASCRYLL, FTINLIAGFLAGLVAALALGG, VLATGFLGGFSTFSTAINEMV, and AAYLVLSLGVPVVAAACGFLV. 2 residues coordinate Na(+): glycine 76 and serine 79.

The protein belongs to the fluoride channel Fluc/FEX (TC 1.A.43) family.

The protein resides in the cell membrane. The catalysed reaction is fluoride(in) = fluoride(out). Na(+) is not transported, but it plays an essential structural role and its presence is essential for fluoride channel function. Functionally, fluoride-specific ion channel. Important for reducing fluoride concentration in the cell, thus reducing its toxicity. This Bifidobacterium longum (strain NCC 2705) protein is Fluoride-specific ion channel FluC 3.